The primary structure comprises 123 residues: Ribosome-binding factor A (123 aa).

Belongs to the RbfA family. As to quaternary structure, monomer. Binds 30S ribosomal subunits, but not 50S ribosomal subunits or 70S ribosomes.

It is found in the cytoplasm. In terms of biological role, one of several proteins that assist in the late maturation steps of the functional core of the 30S ribosomal subunit. Associates with free 30S ribosomal subunits (but not with 30S subunits that are part of 70S ribosomes or polysomes). Required for efficient processing of 16S rRNA. May interact with the 5'-terminal helix region of 16S rRNA. In Prochlorococcus marinus (strain NATL1A), this protein is Ribosome-binding factor A.